A 140-amino-acid polypeptide reads, in one-letter code: Class I hydrophobin B (140 aa).

Residues 1–16 (MKFLAVVSLLAATALA) form the signal peptide. Cystine bridges form between C42–C113, C50–C107, C51–C88, and C114–C133. An N-linked (GlcNAc...) asparagine glycan is attached at N117.

This sequence belongs to the fungal hydrophobin family. As to quaternary structure, self-assembles to form functional amyloid fibrils called rodlets. Self-assembly into fibrillar rodlets occurs spontaneously at hydrophobic:hydrophilic interfaces and the rodlets further associate laterally to form amphipathic monolayers.

The protein localises to the secreted. Its subcellular location is the spore wall. In terms of biological role, aerial growth, conidiation, and dispersal of filamentous fungi in the environment rely upon a capability of their secreting small amphipathic proteins called hydrophobins (HPBs) with low sequence identity. Class I can self-assemble into an outermost layer of rodlet bundles on aerial cell surfaces, conferring cellular hydrophobicity that supports fungal growth, development and dispersal; whereas Class II form highly ordered films at water-air interfaces through intermolecular interactions but contribute nothing to the rodlet structure. RodB is a class I hydrophobin that, unlike rodA, is not required for rodlet formation. The chain is Class I hydrophobin B from Aspergillus fumigatus (strain ATCC MYA-4609 / CBS 101355 / FGSC A1100 / Af293) (Neosartorya fumigata).